The chain runs to 136 residues: MASVTGTSISMASFKASLAPSRVSNLRSVSLPIKGKSFAPLRMRSARFVVCCAAKPETVEKVCAIVKKQLALPDDSAVTGESKFATLGADSLDTVEIVMGLEEEFGINVEEESAQSIATVQDAADLIEKLIEKKSG.

Residues 1–52 (MASVTGTSISMASFKASLAPSRVSNLRSVSLPIKGKSFAPLRMRSARFVVCC) constitute a chloroplast transit peptide. The 76-residue stretch at 56-131 (PETVEKVCAI…DAADLIEKLI (76 aa)) folds into the Carrier domain. Serine 91 carries the O-(pantetheine 4'-phosphoryl)serine modification.

It belongs to the acyl carrier protein (ACP) family. In terms of processing, 4'-phosphopantetheine is transferred from CoA to a specific serine of apo-ACP by acpS. This modification is essential for activity because fatty acids are bound in thioester linkage to the sulfhydryl of the prosthetic group.

The protein localises to the plastid. Its subcellular location is the chloroplast. It participates in lipid metabolism; fatty acid biosynthesis. Functionally, carrier of the growing fatty acid chain in fatty acid biosynthesis. This is Acyl carrier protein 1, chloroplastic (ACP1) from Casuarina glauca (Swamp oak).